A 188-amino-acid polypeptide reads, in one-letter code: Der GTPase-activating protein YihI (188 aa).

2 disordered regions span residues Met1–Pro80 and Asp162–Phe188. The segment covering Thr27 to Asp37 has biased composition (basic and acidic residues). Polar residues predominate over residues Asn47–Gly57.

It belongs to the YihI family. In terms of assembly, interacts with Der.

In terms of biological role, a GTPase-activating protein (GAP) that modifies Der/EngA GTPase function. May play a role in ribosome biogenesis. The polypeptide is Der GTPase-activating protein YihI (Yersinia pseudotuberculosis serotype O:1b (strain IP 31758)).